Consider the following 182-residue polypeptide: Dual-action ribosomal maturation protein DarP (182 aa).

It belongs to the DarP family.

Its subcellular location is the cytoplasm. Member of a network of 50S ribosomal subunit biogenesis factors which assembles along the 30S-50S interface, preventing incorrect 23S rRNA structures from forming. Promotes peptidyl transferase center (PTC) maturation. This Yersinia pestis protein is Dual-action ribosomal maturation protein DarP.